Reading from the N-terminus, the 122-residue chain is MIKGIGIDIIEIERIARALEKNPRFKERLFTLEENRGFIEKGGHPASIAGVFAAKEAVVKALGTGISNMKWKDIEVLKDSAGKPYIKLHNNALEIAYSKNINEIFISISHSKENAVAQAIAT.

2 residues coordinate Mg(2+): Asp-8 and Glu-56.

The protein belongs to the P-Pant transferase superfamily. AcpS family. Mg(2+) is required as a cofactor.

It localises to the cytoplasm. It carries out the reaction apo-[ACP] + CoA = holo-[ACP] + adenosine 3',5'-bisphosphate + H(+). In terms of biological role, transfers the 4'-phosphopantetheine moiety from coenzyme A to a Ser of acyl-carrier-protein. The polypeptide is Holo-[acyl-carrier-protein] synthase (Alkaliphilus metalliredigens (strain QYMF)).